Reading from the N-terminus, the 60-residue chain is Arabinogalactan protein 14 (60 aa).

Positions 1–28 are cleaved as a signal peptide; that stretch reads MEAMKMKLYVVVLVAVIAFSTVHQTVAA. Residues proline 32, proline 34, and proline 36 each carry the 4-hydroxyproline modification. Residues proline 32, proline 34, and proline 36 are each glycosylated (O-linked (Ara...) hydroxyproline). Residue serine 38 is the site of GPI-anchor amidated serine attachment. A propeptide spans 39 to 60 (removed in mature form); the sequence is DASSFIPTFFASVAVMAFGFFF.

It belongs to the AG-peptide AGP family. Contains 4-hydroxyproline; hydroxylated on Pro-32, Pro-34 and Pro-36. In terms of processing, O-glycosylated on hydroxyprolines; noncontiguous hydroxylproline residues are glycosylated with arabinogalactan.

The protein resides in the cell membrane. In terms of biological role, proteoglycan that seems to be implicated in diverse developmental roles such as differentiation, cell-cell recognition, embryogenesis and programmed cell death. Involved in the regulation of root hair elongation. In Arabidopsis thaliana (Mouse-ear cress), this protein is Arabinogalactan protein 14.